The following is a 427-amino-acid chain: Enolase (427 aa).

Residue Q164 coordinates (2R)-2-phosphoglycerate. Catalysis depends on E206, which acts as the Proton donor. Mg(2+) is bound by residues D243, E284, and D311. (2R)-2-phosphoglycerate-binding residues include K336, R365, S366, and K387. The Proton acceptor role is filled by K336.

It belongs to the enolase family. The cofactor is Mg(2+).

Its subcellular location is the cytoplasm. It is found in the secreted. The protein resides in the cell surface. It catalyses the reaction (2R)-2-phosphoglycerate = phosphoenolpyruvate + H2O. It participates in carbohydrate degradation; glycolysis; pyruvate from D-glyceraldehyde 3-phosphate: step 4/5. Functionally, catalyzes the reversible conversion of 2-phosphoglycerate (2-PG) into phosphoenolpyruvate (PEP). It is essential for the degradation of carbohydrates via glycolysis. This chain is Enolase, found in Synechococcus sp. (strain JA-2-3B'a(2-13)) (Cyanobacteria bacterium Yellowstone B-Prime).